Consider the following 266-residue polypeptide: Outer kinetochore KNL1 complex subunit ZWINT (266 aa).

The tract at residues 95–115 (DQNPDALASEDTSRQKATETK) is disordered. Residues 105–115 (DTSRQKATETK) are compositionally biased toward basic and acidic residues. Residues 136 to 237 (LSEALPQVKE…QRNQSYLQLL (102 aa)) are a coiled coil. A phosphoserine mark is found at Ser-232 and Ser-265.

As to quaternary structure, component of the KNL1 complex composed of KNL1 and ZWINT. Part of the ten-subunit outer kinetochore KMN network that includes the KNL1, MIS12 and NDC80 complexes; a bioriented kinetochore contains approximately 150 copies of the network. Interacts with the MIS12 complex subunits MIS12 DSN1, and PMF1. Interacts with the NDC80 complex subunit NDC80 during mitosis. Interacts with ZW10. Interacts with CETN3. Expressed abundantly in brain and at lower levels in testis and kidney.

Its subcellular location is the nucleus. The protein resides in the chromosome. It localises to the centromere. The protein localises to the kinetochore. In terms of biological role, acts as a component of the outer kinetochore KNL1 complex that serves as a docking point for spindle assembly checkpoint components and mediates microtubule-kinetochore interactions. Kinetochores, consisting of a centromere-associated inner segment and a microtubule-contacting outer segment, play a crucial role in chromosome segregation by mediating the physical connection between centromeric DNA and spindle microtubules. The outer kinetochore is made up of the ten-subunit KMN network, comprising the MIS12, NDC80 and KNL1 complexes, and auxiliary microtubule-associated components; together they connect the outer kinetochore with the inner kinetochore, bind microtubules, and mediate interactions with mitotic checkpoint proteins that delay anaphase until chromosomes are bioriented on the spindle. Targets the RZZ complex to the kinetochore at prometaphase. Recruits MAD2L1 to the kinetochore, but is not required for BUB1B localization. In addition to orienting mitotic chromosomes, it is also essential for alignment of homologous chromosomes during meiotic metaphase I. In meiosis I, required to activate the spindle assembly checkpoint at unattached kinetochores to correct erroneous kinetochore-microtubule attachments. This is Outer kinetochore KNL1 complex subunit ZWINT (Zwint) from Rattus norvegicus (Rat).